A 93-amino-acid chain; its full sequence is UPF0521 protein A (93 aa).

A coiled-coil region spans residues 2–58 (SLKEVITSLKNDFHSINKEIDSMKENNEKQEDKIFQEIKKLKLEMELLRKDNLSFKT).

This sequence belongs to the UPF0521 family.

The polypeptide is UPF0521 protein A (Dictyostelium discoideum (Social amoeba)).